We begin with the raw amino-acid sequence, 375 residues long: 23S rRNA (uracil(747)-C(5))-methyltransferase RlmC (375 aa).

4 residues coordinate [4Fe-4S] cluster: C3, C11, C14, and C87. Q212, F241, E262, and N307 together coordinate S-adenosyl-L-methionine. Catalysis depends on C334, which acts as the Nucleophile.

It belongs to the class I-like SAM-binding methyltransferase superfamily. RNA M5U methyltransferase family. RlmC subfamily.

It catalyses the reaction uridine(747) in 23S rRNA + S-adenosyl-L-methionine = 5-methyluridine(747) in 23S rRNA + S-adenosyl-L-homocysteine + H(+). In terms of biological role, catalyzes the formation of 5-methyl-uridine at position 747 (m5U747) in 23S rRNA. The polypeptide is 23S rRNA (uracil(747)-C(5))-methyltransferase RlmC (Escherichia coli O9:H4 (strain HS)).